The chain runs to 449 residues: Type 3 secretion system ATPase (449 aa).

ATP is bound at residue 178-183 (GCGKTT).

Belongs to the ATPase alpha/beta chains family. T3SS ATPase subfamily. As to quaternary structure, the core secretion machinery of the T3SS is composed of approximately 20 different proteins, including cytoplasmic components, a base, an export apparatus and a needle. This subunit is part of the cytosolic complex. Forms homododecamers. Comprises two hexameric rings that are probably stacked face-to-face by the association of their C-terminal domains. Also present as monomer and homohexamer in solution.

The protein localises to the cytoplasm. It catalyses the reaction ATP + H2O + cellular proteinSide 1 = ADP + phosphate + cellular proteinSide 2.. Its activity is regulated as follows. Oligomerization increases ATPase activity. ATPase component of the type III secretion system (T3SS), also called injectisome, which is used to inject bacterial effector proteins into eukaryotic host cells. Acts as a molecular motor to provide the energy that is required for the export of proteins. Required for type III secretion apparatus (T3SA) formation, proper protein secretion, host cell invasion and virulence. May play a critical role in T3SS substrate recognition, disassembly of the effector/chaperone complex and unfolding of the effector in an ATP-dependent manner prior to secretion. The protein is Type 3 secretion system ATPase of Pseudomonas savastanoi pv. phaseolicola (Pseudomonas syringae pv. phaseolicola).